Here is a 118-residue protein sequence, read N- to C-terminus: Small ribosomal subunit protein uS13 (118 aa).

Positions 99 to 118 (GQRTRTNARTRKGPRKAIKK) are disordered.

It belongs to the universal ribosomal protein uS13 family. Part of the 30S ribosomal subunit. Forms a loose heterodimer with protein S19. Forms two bridges to the 50S subunit in the 70S ribosome.

Functionally, located at the top of the head of the 30S subunit, it contacts several helices of the 16S rRNA. In the 70S ribosome it contacts the 23S rRNA (bridge B1a) and protein L5 of the 50S subunit (bridge B1b), connecting the 2 subunits; these bridges are implicated in subunit movement. Contacts the tRNAs in the A and P-sites. This is Small ribosomal subunit protein uS13 from Xylella fastidiosa (strain M12).